We begin with the raw amino-acid sequence, 453 residues long: tRNA modification GTPase MnmE (453 aa).

(6S)-5-formyl-5,6,7,8-tetrahydrofolate is bound by residues Arg22, Glu79, and Lys119. Positions 215–376 constitute a TrmE-type G domain; that stretch reads GMKVVIAGRP…LKQHLKSLMG (162 aa). Asn225 contacts K(+). GTP is bound by residues 225–230, 244–250, 269–272, and 334–337; these read NAGKSS, TEIAGTT, DTAG, and NKAD. Residue Ser229 coordinates Mg(2+). K(+) contacts are provided by Thr244, Ile246, and Thr249. Thr250 contributes to the Mg(2+) binding site. Lys453 lines the (6S)-5-formyl-5,6,7,8-tetrahydrofolate pocket.

Belongs to the TRAFAC class TrmE-Era-EngA-EngB-Septin-like GTPase superfamily. TrmE GTPase family. As to quaternary structure, homodimer. Heterotetramer of two MnmE and two MnmG subunits. K(+) is required as a cofactor.

It is found in the cytoplasm. Its function is as follows. Exhibits a very high intrinsic GTPase hydrolysis rate. Involved in the addition of a carboxymethylaminomethyl (cmnm) group at the wobble position (U34) of certain tRNAs, forming tRNA-cmnm(5)s(2)U34. The polypeptide is tRNA modification GTPase MnmE (Shewanella sp. (strain MR-7)).